A 399-amino-acid polypeptide reads, in one-letter code: Protein shisa-8 (399 aa).

The N-terminal stretch at 1-36 (MERAGARGQRCGRRSHGLPLALRLALLLAGSPSGRA) is a signal peptide. The Extracellular portion of the chain corresponds to 37–136 (GAPEEQEIAG…APRDPARERS (100 aa)). N73 carries an N-linked (GlcNAc...) asparagine glycan. A helical membrane pass occupies residues 137–157 (HTAVYAVCGVAALLVLVGIGA). Topologically, residues 158-399 (RLGLERAHSP…STNSKAEVTV (242 aa)) are cytoplasmic. Disordered stretches follow at residues 207-248 (GDGV…GGSL) and 378-399 (FYSS…EVTV). A compositionally biased stretch (polar residues) spans 389–399 (LSTNSKAEVTV).

This sequence belongs to the shisa family. Interacts with AMPAR subunits GRIA1 and GRIA2. As to expression, brain-specific. Highly expressed in cerebellum and olfactory bulb.

Its subcellular location is the membrane. In terms of biological role, may regulate trafficking and current kinetics of AMPA-type glutamate receptor (AMPAR) at synapses. The polypeptide is Protein shisa-8 (Mus musculus (Mouse)).